The primary structure comprises 270 residues: Phosphonoacetaldehyde hydrolase (270 aa).

Asp-11 serves as the catalytic Nucleophile. Mg(2+) contacts are provided by Asp-11 and Ala-13. Lys-53 (schiff-base intermediate with substrate) is an active-site residue. Residue Asp-187 participates in Mg(2+) binding.

The protein belongs to the HAD-like hydrolase superfamily. PhnX family. As to quaternary structure, homodimer. Mg(2+) serves as cofactor.

It catalyses the reaction phosphonoacetaldehyde + H2O = acetaldehyde + phosphate + H(+). Its function is as follows. Involved in phosphonate degradation. The sequence is that of Phosphonoacetaldehyde hydrolase from Salmonella choleraesuis (strain SC-B67).